A 157-amino-acid polypeptide reads, in one-letter code: MRCPFCGHMESQVKDSRPSEDGAAIRRRRLCPECGGRFTTFERVQLRELTIVKRSGRRSPFDREKLVRSISIATRKRPVDPERVERMVNGIVRQLESQGETELPSSAVGEMVMKALKSLDDVAYVRYASVYRDFRETSDFAKFLGAEGLSDVADDEL.

Residues 3 to 34 (CPFCGHMESQVKDSRPSEDGAAIRRRRLCPEC) fold into a zinc finger. In terms of domain architecture, ATP-cone spans 49 to 139 (LTIVKRSGRR…VYRDFRETSD (91 aa)).

Belongs to the NrdR family. Zn(2+) is required as a cofactor.

Negatively regulates transcription of bacterial ribonucleotide reductase nrd genes and operons by binding to NrdR-boxes. The polypeptide is Transcriptional repressor NrdR (Caulobacter sp. (strain K31)).